Here is an 89-residue protein sequence, read N- to C-terminus: Elongation factor 1-beta (89 aa).

Belongs to the EF-1-beta/EF-1-delta family.

Promotes the exchange of GDP for GTP in EF-1-alpha/GDP, thus allowing the regeneration of EF-1-alpha/GTP that could then be used to form the ternary complex EF-1-alpha/GTP/AAtRNA. This Methanococcus maripaludis (strain C7 / ATCC BAA-1331) protein is Elongation factor 1-beta.